The primary structure comprises 377 residues: UPF0754 membrane protein lwe2241 (377 aa).

Transmembrane regions (helical) follow at residues 1–21 and 357–377; these read MSVLFTILLMAVIGGFIGAMT and YLGGILGGFIGVIQGILAIWI.

The protein belongs to the UPF0754 family.

Its subcellular location is the cell membrane. In Listeria welshimeri serovar 6b (strain ATCC 35897 / DSM 20650 / CCUG 15529 / CIP 8149 / NCTC 11857 / SLCC 5334 / V8), this protein is UPF0754 membrane protein lwe2241.